The primary structure comprises 143 residues: Nucleoside diphosphate kinase (143 aa).

ATP-binding residues include Lys-11, Phe-59, Arg-87, Thr-93, Arg-104, and Asn-114. The active-site Pros-phosphohistidine intermediate is the His-117.

This sequence belongs to the NDK family. As to quaternary structure, homotetramer. The cofactor is Mg(2+).

The protein resides in the cytoplasm. The enzyme catalyses a 2'-deoxyribonucleoside 5'-diphosphate + ATP = a 2'-deoxyribonucleoside 5'-triphosphate + ADP. The catalysed reaction is a ribonucleoside 5'-diphosphate + ATP = a ribonucleoside 5'-triphosphate + ADP. Major role in the synthesis of nucleoside triphosphates other than ATP. The ATP gamma phosphate is transferred to the NDP beta phosphate via a ping-pong mechanism, using a phosphorylated active-site intermediate. This chain is Nucleoside diphosphate kinase, found in Shewanella halifaxensis (strain HAW-EB4).